The chain runs to 126 residues: Protein VraC (126 aa).

This Staphylococcus haemolyticus (strain JCSC1435) protein is Protein VraC.